A 211-amino-acid polypeptide reads, in one-letter code: MKVTAAFAGLLVTAFAAPVPEPVLVSRSAGINYVQNYNGNLGDFTYDESAGTFSMYWEDGVSSDFVVGLGWTTGSSNAITYSAEYSASGSSSYLAVYGWVNYPQAEYYIVEDYGDYNPCSSATSLGTVYSDGSTYQVCTDTRTNEPSITGTSTFTQYFSVRESTRTSGTVTVANHFNFWAQHGFGNSDFNYQVMAVEAWSGAGSASVTISS.

Residues 1-27 (MKVTAAFAGLLVTAFAAPVPEPVLVSR) form the signal peptide. A GH11 domain is found at 28–210 (SAGINYVQNY…GAGSASVTIS (183 aa)). E106 functions as the Nucleophile in the catalytic mechanism. A disulfide bridge connects residues C119 and C138. The Proton donor role is filled by E197.

It belongs to the glycosyl hydrolase 11 (cellulase G) family.

The protein resides in the secreted. The catalysed reaction is Endohydrolysis of (1-&gt;4)-beta-D-xylosidic linkages in xylans.. It functions in the pathway glycan degradation; xylan degradation. This Aspergillus kawachii (strain NBRC 4308) (White koji mold) protein is Endo-1,4-beta-xylanase 3 (xynC).